The sequence spans 253 residues: FGFR1 oncogene partner 2 (253 aa).

Residues 5 to 104 (IEKALADAKA…SALELIMSKY (100 aa)) are a coiled coil. Ser-141 bears the Phosphoserine mark. A coiled-coil region spans residues 160–223 (LERRHLEANQ…LREILQITRE (64 aa)). The segment at 231–253 (DDASESTSLSALVTNSDLSLRKS) is disordered. Over residues 235-253 (ESTSLSALVTNSDLSLRKS) the composition is skewed to polar residues.

It belongs to the SIKE family. Expressed in bone marrow, spleen and thymus.

It is found in the cytoplasm. Its function is as follows. May be involved in wound healing pathway. This is FGFR1 oncogene partner 2 (FGFR1OP2) from Homo sapiens (Human).